The chain runs to 243 residues: Cell division protein ZipA (243 aa).

The Periplasmic portion of the chain corresponds to 1 to 4; the sequence is MSDV. Residues 5–25 traverse the membrane as a helical segment; sequence TLLRIGIAIVGILFVAAVFFF. Residues 26-243 are Cytoplasmic-facing; it reads STPKTSAHRV…VPPLIKNSRW (218 aa). The tract at residues 32 to 89 is disordered; it reads AHRVRTKKEEPPRERREPMLSTEADNSPPQGVDEVPASVSQQQVNPEANKPGEVQLGK. Residues 38–49 are compositionally biased toward basic and acidic residues; the sequence is KKEEPPRERREP.

It belongs to the ZipA family. In terms of assembly, interacts with FtsZ via their C-terminal domains.

The protein resides in the cell inner membrane. Functionally, essential cell division protein that stabilizes the FtsZ protofilaments by cross-linking them and that serves as a cytoplasmic membrane anchor for the Z ring. Also required for the recruitment to the septal ring of downstream cell division proteins. This is Cell division protein ZipA from Xylella fastidiosa (strain 9a5c).